A 464-amino-acid polypeptide reads, in one-letter code: Cytoplasmic tRNA 2-thiolation protein 2 (464 aa).

It belongs to the CTU2/NCS2 family.

It is found in the cytoplasm. It functions in the pathway tRNA modification; 5-methoxycarbonylmethyl-2-thiouridine-tRNA biosynthesis. In terms of biological role, plays a central role in 2-thiolation of mcm(5)S(2)U at tRNA wobble positions of tRNA(Lys), tRNA(Glu) and tRNA(Gln). May act by forming a heterodimer with NCS6/CTU1 that ligates sulfur from thiocarboxylated URM1 onto the uridine of tRNAs at wobble position. This chain is Cytoplasmic tRNA 2-thiolation protein 2, found in Oryza sativa subsp. japonica (Rice).